The primary structure comprises 340 residues: GTPase Obg (340 aa).

Residues 1-159 (MGFIDEVKLC…KHVLLKLKVL (159 aa)) form the Obg domain. The OBG-type G domain maps to 160–329 (SDVGIIGMPN…LSEKLKKSNS (170 aa)). Residues 166-173 (GMPNAGKS), 191-195 (FTTVR), 212-215 (DIPG), 279-282 (NKCD), and 310-312 (NGD) each bind GTP. Mg(2+)-binding residues include Ser-173 and Thr-193.

This sequence belongs to the TRAFAC class OBG-HflX-like GTPase superfamily. OBG GTPase family. Monomer. It depends on Mg(2+) as a cofactor.

Its subcellular location is the cytoplasm. In terms of biological role, an essential GTPase which binds GTP, GDP and possibly (p)ppGpp with moderate affinity, with high nucleotide exchange rates and a fairly low GTP hydrolysis rate. Plays a role in control of the cell cycle, stress response, ribosome biogenesis and in those bacteria that undergo differentiation, in morphogenesis control. This chain is GTPase Obg, found in Wolbachia pipientis wMel.